The following is a 157-amino-acid chain: Pyruvoyl-dependent arginine decarboxylase 1 (157 aa).

Position 41 is a pyruvic acid (Ser) (Ser-41).

This sequence belongs to the PdaD family. Requires pyruvate as cofactor.

The catalysed reaction is L-arginine + H(+) = agmatine + CO2. The protein is Pyruvoyl-dependent arginine decarboxylase 1 (pdaD1) of Archaeoglobus fulgidus (strain ATCC 49558 / DSM 4304 / JCM 9628 / NBRC 100126 / VC-16).